The primary structure comprises 669 residues: GTP-binding protein 1 (669 aa).

Positions 1–32 (MAAERSRSPMESPVPASMFAPEPSSPGAARAA) are disordered. A phosphoserine mark is found at serine 6, serine 8, serine 12, serine 24, serine 25, serine 44, serine 47, and serine 69. Positions 158–389 (FLEVRVAVVG…LNLLSPRTSY (232 aa)) constitute a tr-type G domain. Positions 167-174 (GNVDAGKS) are G1. 167-174 (GNVDAGKS) serves as a coordination point for GTP. The tract at residues 206 to 210 (GRTSS) is G2. The interval 252-255 (DLAG) is G3. Residues 252 to 256 (DLAGH) and 308 to 311 (TKID) contribute to the GTP site. The segment at 308-311 (TKID) is G4. The tract at residues 366–368 (SNV) is G5. Residues 573 to 595 (LLQTTNNSPMNSKPQQIKMQSTK) are compositionally biased toward polar residues. Positions 573–669 (LLQTTNNSPM…GACMTPASGC (97 aa)) are disordered. Serine 580 is modified (phosphoserine). Low complexity predominate over residues 633-645 (SSSLQPQPKPSSG). Over residues 646-657 (GRRRGGQRHKVK) the composition is skewed to basic residues.

This sequence belongs to the TRAFAC class translation factor GTPase superfamily. Classic translation factor GTPase family. GTPBP1 subfamily. In terms of assembly, interacts with EXOSC2/RRP4, EXOSC3/RRP40, EXOSC5/RRP46, HNRNPD, HNRNPR and SYNCRIP. Identified in a complex with AANAT mRNA, but does not bind mRNA by itself.

Its subcellular location is the cytoplasm. Its function is as follows. Promotes degradation of target mRNA species. Plays a role in the regulation of circadian mRNA stability. Binds GTP and has GTPase activity. The sequence is that of GTP-binding protein 1 (GTPBP1) from Bos taurus (Bovine).